We begin with the raw amino-acid sequence, 850 residues long: G-type lectin S-receptor-like serine/threonine-protein kinase CES101 (850 aa).

Positions 1–22 (MWSNCIFLTLFTFYLFLGQSCC) are cleaved as a signal peptide. Over 23-423 (QTDTLLQGQY…IKGSKLAATW (401 aa)) the chain is Extracellular. Residues 24–144 (TDTLLQGQYL…DSDGSMKRTL (121 aa)) enclose the Bulb-type lectin domain. N-linked (GlcNAc...) asparagine glycosylation is found at Asn55, Asn118, Asn194, and Asn374. A PAN domain is found at 334 to 416 (CSRFGYTFRE…PRTIYIRIKG (83 aa)). Cystine bridges form between Cys367–Cys390 and Cys371–Cys377. A helical membrane pass occupies residues 424–444 (LVVVASLFLIIPVTWLIIYLV). At 445 to 850 (LRKFKIKGTN…RVTITVMEAR (406 aa)) the chain is on the cytoplasmic side. The region spanning 527 to 816 (FSDANKLGEG…ALSLPKEPAF (290 aa)) is the Protein kinase domain. ATP is bound by residues 533 to 541 (LGEGGFGPV) and Lys555. Ser561 is modified (phosphoserine). The segment at 616 to 633 (LRKIVLDWKLRFRIMEGI) is caM-binding. Catalysis depends on Asp652, which acts as the Proton acceptor. At Ser669 the chain carries Phosphoserine. Phosphothreonine is present on Thr686. 2 positions are modified to phosphoserine: Ser730 and Ser838. Residue Thr845 is modified to Phosphothreonine.

The protein belongs to the protein kinase superfamily. Ser/Thr protein kinase family. As to expression, mostly expressed in leaves, and, to a lower extent, in roots and flowers.

It localises to the cell membrane. The catalysed reaction is L-seryl-[protein] + ATP = O-phospho-L-seryl-[protein] + ADP + H(+). It carries out the reaction L-threonyl-[protein] + ATP = O-phospho-L-threonyl-[protein] + ADP + H(+). Functionally, promotes the expression of genes involved in photosynthesis at least in dedifferentiated calli. This is G-type lectin S-receptor-like serine/threonine-protein kinase CES101 (CES101) from Arabidopsis thaliana (Mouse-ear cress).